The primary structure comprises 148 residues: MKIWVDADAAPVAIKEILYKLADKRKVETIFVANRVLKLPRSQHLHFRLVAAGADVADGEIVRLLKKGDLVITADIPLASLVVEKGGTALNPRGELYTKENIAERLSSRDFMQELRDGGVETGGAPPFSAKDKQRFANAIDRILARLR.

The protein belongs to the UPF0178 family.

The chain is UPF0178 protein DP1304 from Desulfotalea psychrophila (strain LSv54 / DSM 12343).